We begin with the raw amino-acid sequence, 1221 residues long: 2-oxoglutarate dehydrogenase E1/E2 component (1221 aa).

Residues 2-40 form a 2-oxoglutarate dehydrogenase E1, N-terminal part region; that stretch reads SSASTFGQNAWLVDEMFQQFQKDPKSVDKEWRELFEAQG. The segment at 22-107 is disordered; the sequence is QKDPKSVDKE…KLPEPGQTPI (86 aa). Residues 23–36 show a composition bias toward basic and acidic residues; that stretch reads KDPKSVDKEWRELF. A compositionally biased stretch (polar residues) spans 41–52; the sequence is GPNTTPATTEAQ. The segment at 41-89 is linker; the sequence is GPNTTPATTEAQPSAPKESAKPAPKAAPAAKAAPRVETKPADKTAPKAK. Residues 53-73 show a composition bias toward low complexity; sequence PSAPKESAKPAPKAAPAAKAA. Basic and acidic residues predominate over residues 74–90; the sequence is PRVETKPADKTAPKAKE. Positions 90–337 are succinyltransferase E2; sequence ESSVPQQPKL…LRTMSRLLTD (248 aa). H316 acts as the Proton acceptor; for succinyltransferase activity in catalysis. The tract at residues 338–1221 is 2-oxoglutarate dehydrogenase E1, C-terminal part; the sequence is DSFWDEIFDA…KQLIDEAFEA (884 aa). Thiamine diphosphate is bound at residue R544. 2-oxoglutarate is bound by residues H583 and S608. Thiamine diphosphate contacts are provided by S608, L610, D645, A646, A647, and N678. D645 provides a ligand contact to Mg(2+). 2 residues coordinate Mg(2+): N678 and I680. H1017 contributes to the 2-oxoglutarate binding site. The acetyl-CoA site is built by T1035, R1051, K1087, S1090, and R1144.

In the N-terminal section; belongs to the alpha-ketoglutarate dehydrogenase family. The protein in the C-terminal section; belongs to the 2-oxoacid dehydrogenase family. As to quaternary structure, homodimer. Part of an unusual ODH/PDH supercomplex, consisting of AceE (E1), AceF (E2), and Lpd (E3) together with OdhA (E1+E2). Interacts with the FHA domain of unphosphorylated OdhI via its C-terminal dehydrogenase domain. It depends on Mg(2+) as a cofactor. Requires thiamine diphosphate as cofactor.

The catalysed reaction is N(6)-[(R)-lipoyl]-L-lysyl-[protein] + 2-oxoglutarate + H(+) = N(6)-[(R)-S(8)-succinyldihydrolipoyl]-L-lysyl-[protein] + CO2. It catalyses the reaction N(6)-[(R)-dihydrolipoyl]-L-lysyl-[protein] + succinyl-CoA = N(6)-[(R)-S(8)-succinyldihydrolipoyl]-L-lysyl-[protein] + CoA. Its pathway is carbohydrate metabolism; tricarboxylic acid cycle; succinyl-CoA from 2-oxoglutarate (dehydrogenase route): step 1/1. Its activity is regulated as follows. Inhibited by unphosphorylated OdhI, but not by phosphorylated OdhI. Catalyzes the E1 and E2 reactions as part of 2-oxoglutarate dehydrogenase (ODH) activity, to convert 2-oxoglutarate to succinyl-CoA and CO(2). OdhA has reductase activity with 2-oxoglutarate but does not react with pyruvate, and also displays transsuccinylase but no transacetylase activity. Since OdhA is not lipoylated, the succinyltransferase activity of its E2 domain is dependent on lipoyl residues of the acetyltransferase AceF. In Corynebacterium glutamicum (strain ATCC 13032 / DSM 20300 / JCM 1318 / BCRC 11384 / CCUG 27702 / LMG 3730 / NBRC 12168 / NCIMB 10025 / NRRL B-2784 / 534), this protein is 2-oxoglutarate dehydrogenase E1/E2 component.